The chain runs to 222 residues: Charged multivesicular body protein 4b (222 aa).

Disordered regions lie at residues 1 to 21 (MSLIGKLFGTGGKGAKGPSPQ) and 183 to 222 (GPETVPLPNVPAAVLPAKPVKKKQEEDDDDMRELENWATA). Residues 21–182 (QEAIQKLRDT…ELDKNLLEVQ (162 aa)) are a coiled coil. Residues 188-200 (PLPNVPAAVLPAK) are compositionally biased toward low complexity.

Belongs to the SNF7 family. As to quaternary structure, probable core component of the endosomal sorting required for transport complex III (ESCRT-III). ESCRT-III components are thought to multimerize to form a flat lattice on the perimeter membrane of the endosome.

Its subcellular location is the cytoplasm. It is found in the cytosol. It localises to the late endosome membrane. The protein localises to the midbody. Functionally, probable core component of the endosomal sorting required for transport complex III (ESCRT-III) which is involved in multivesicular bodies (MVBs) formation and sorting of endosomal cargo proteins into MVBs. MVBs contain intraluminal vesicles (ILVs) that are generated by invagination and scission from the limiting membrane of the endosome and mostly are delivered to lysosomes enabling degradation of membrane proteins, such as stimulated growth factor receptors, lysosomal enzymes and lipids. This Xenopus tropicalis (Western clawed frog) protein is Charged multivesicular body protein 4b (chmp4b).